Consider the following 263-residue polypeptide: R-spondin-1 (263 aa).

An N-terminal signal peptide occupies residues 1 to 20; that stretch reads MRLGLCVVALVLSWTHLTIS. FU repeat units follow at residues 34-85 and 91-135; these read AEGS…GYFD and MNKC…GSSA. Intrachain disulfides connect C40–C47, C44–C53, C56–C75, C79–C94, C97–C105, C102–C111, C114–C125, C129–C142, C148–C190, C159–C166, and C199–C206. The N-linked (GlcNAc...) asparagine glycan is linked to N137. Residues 147–207 enclose the TSP type-1 domain; sequence QCEMSEWSPW…RCTVRRVPCP (61 aa). C-linked (Man) tryptophan glycosylation is found at W153 and W156. Residues 206 to 263 are disordered; that stretch reads CPEGQKRRKGGQGRRENANRNLARKESKEAGAGSRRRKGQQQQQQQGTVGPLTSAGPA. Positions 218 to 234 are enriched in basic and acidic residues; it reads GRRENANRNLARKESKE.

Belongs to the R-spondin family. As to quaternary structure, interacts with the extracellular domain of FZD8 and LRP6. It however does not form a ternary complex with FZD8 and LRP6. Interacts with WNT1. Binds heparin. Interacts with ZNRF3; promoting indirect interaction between ZNRF3 and LGR4 and membrane clearance of ZNRF3. Interacts with LGR4, LGR5 and LGR6. Identified in a complex composed of RNF43, LGR5 and RSPO1. Interacts (via FU repeats) with KREM1. C-, and N-glycosylated. N-glycosylation at Asn-137, negatively influences its secretion and enhancing effect on Wnt/beta-catenin signaling. C-mannosylation at Trp-156 by DPY19L3 is required for its secretion and regulates the enhancing activity of Wnt signaling. Abundantly expressed in adrenal glands, ovary, testis, thyroid and trachea but not in bone marrow, spinal cord, stomach, leukocytes colon, small intestine, prostate, thymus and spleen.

It is found in the secreted. Its subcellular location is the nucleus. Activator of the canonical Wnt signaling pathway by acting as a ligand for LGR4-6 receptors. Upon binding to LGR4-6 (LGR4, LGR5 or LGR6), LGR4-6 associate with phosphorylated LRP6 and frizzled receptors that are activated by extracellular Wnt receptors, triggering the canonical Wnt signaling pathway to increase expression of target genes. Also regulates the canonical Wnt/beta-catenin-dependent pathway and non-canonical Wnt signaling by acting as an inhibitor of ZNRF3, an important regulator of the Wnt signaling pathway. Acts as a ligand for frizzled FZD8 and LRP6. May negatively regulate the TGF-beta pathway. Has a essential roles in ovary determination. Regulates Wnt signaling by antagonizing DKK1/KREM1-mediated internalization of LRP6 through an interaction with KREM1. The sequence is that of R-spondin-1 (RSPO1) from Homo sapiens (Human).